Reading from the N-terminus, the 729-residue chain is Pentatricopeptide repeat-containing protein At4g04370 (729 aa).

PPR repeat units follow at residues serine 10–proline 44, aspartate 45–serine 79, aspartate 80–arginine 110, aspartate 111–proline 145, aspartate 178–arginine 208, aspartate 209–proline 243, aspartate 244–valine 278, aspartate 279–lysine 309, aspartate 310–leucine 344, serine 345–leucine 379, aspartate 380–serine 414, tryptophan 415–glutamine 445, aspartate 447–proline 481, cysteine 482–lysine 512, aspartate 513–proline 547, asparagine 548–proline 583, and asparagine 584–aspartate 618. The type E motif stretch occupies residues valine 619–asparagine 694. The segment at glycine 695–methionine 723 is type E(+) motif.

It belongs to the PPR family. PCMP-E subfamily.

The protein is Pentatricopeptide repeat-containing protein At4g04370 (PCMP-E99) of Arabidopsis thaliana (Mouse-ear cress).